We begin with the raw amino-acid sequence, 261 residues long: UPF0328 protein ECU03_1620 (261 aa).

Belongs to the UPF0328 family.

In Encephalitozoon cuniculi (strain GB-M1) (Microsporidian parasite), this protein is UPF0328 protein ECU03_1620.